The following is a 178-amino-acid chain: MNYSVIWAITILILGLVLTLAWARQNPTHPINPLVLNYHTKPSPKRHRMVLVVESFASVDALVELVENILSQTIRVASITVVSQRPDHLRQVPLLHQTCTFSRASGLSALFKETSGTLVVFISKEGFHHFQSPTLLETIDQRGVTAEQTLPGIVLRNTDMPGIDLTTVYRQQRLGLGN.

The first 23 residues, 1 to 23, serve as a signal peptide directing secretion; sequence MNYSVIWAITILILGLVLTLAWA.

This is an uncharacterized protein from Invertebrate iridescent virus 3 (IIV-3).